Here is a 207-residue protein sequence, read N- to C-terminus: Holliday junction branch migration complex subunit RuvA (207 aa).

The domain I stretch occupies residues 1–64; it reads MIGRLRGNLL…EDAQLLYGFN (64 aa). A domain II region spans residues 65-143; that stretch reads TKNERALFRE…GWGAGDLFTP (79 aa). The interval 144-158 is flexible linker; it reads ATDAAPMDDGSEFIT. Residues 159–207 are domain III; that stretch reads SPQSAVDEAVSALIALGYKPQQASKTVSQIAKPDMTSEVLIRESLKSMI.

Belongs to the RuvA family. In terms of assembly, homotetramer. Forms an RuvA(8)-RuvB(12)-Holliday junction (HJ) complex. HJ DNA is sandwiched between 2 RuvA tetramers; dsDNA enters through RuvA and exits via RuvB. An RuvB hexamer assembles on each DNA strand where it exits the tetramer. Each RuvB hexamer is contacted by two RuvA subunits (via domain III) on 2 adjacent RuvB subunits; this complex drives branch migration. In the full resolvosome a probable DNA-RuvA(4)-RuvB(12)-RuvC(2) complex forms which resolves the HJ.

The protein localises to the cytoplasm. Functionally, the RuvA-RuvB-RuvC complex processes Holliday junction (HJ) DNA during genetic recombination and DNA repair, while the RuvA-RuvB complex plays an important role in the rescue of blocked DNA replication forks via replication fork reversal (RFR). RuvA specifically binds to HJ cruciform DNA, conferring on it an open structure. The RuvB hexamer acts as an ATP-dependent pump, pulling dsDNA into and through the RuvAB complex. HJ branch migration allows RuvC to scan DNA until it finds its consensus sequence, where it cleaves and resolves the cruciform DNA. The chain is Holliday junction branch migration complex subunit RuvA from Aliivibrio fischeri (strain ATCC 700601 / ES114) (Vibrio fischeri).